A 317-amino-acid chain; its full sequence is Olfactory receptor 1B1 (317 aa).

Over methionine 1–phenylalanine 29 the chain is Extracellular. Residues asparagine 6 and asparagine 22 are each glycosylated (N-linked (GlcNAc...) asparagine). The chain crosses the membrane as a helical span at residues phenylalanine 30–isoleucine 50. Topologically, residues serine 51–glycine 66 are cytoplasmic. Residues leucine 67 to valine 87 form a helical membrane-spanning segment. Residues serine 88 to cysteine 98 are Extracellular-facing. A disulfide bond links cysteine 98 and cysteine 184. The helical transmembrane segment at leucine 99–methionine 119 threads the bilayer. At alanine 120–cysteine 144 the chain is on the cytoplasmic side. Residues leucine 145–leucine 165 form a helical membrane-spanning segment. Residues proline 166 to glutamate 201 lie on the Extracellular side of the membrane. The helical transmembrane segment at leucine 202–serine 222 threads the bilayer. The Cytoplasmic segment spans residues tyrosine 223–serine 248. A helical transmembrane segment spans residues histidine 249–phenylalanine 269. Residues glutamine 270–aspartate 276 are Extracellular-facing. A helical membrane pass occupies residues methionine 277–leucine 297. The Cytoplasmic segment spans residues histidine 298–proline 317.

Belongs to the G-protein coupled receptor 1 family.

Its subcellular location is the cell membrane. Odorant receptor. This Homo sapiens (Human) protein is Olfactory receptor 1B1 (OR1B1).